Consider the following 192-residue polypeptide: Xanthine phosphoribosyltransferase (192 aa).

Xanthine is bound by residues L20 and N27. 128-132 (ANGDA) serves as a coordination point for 5-phospho-alpha-D-ribose 1-diphosphate. K156 lines the xanthine pocket.

The protein belongs to the purine/pyrimidine phosphoribosyltransferase family. Xpt subfamily. Homodimer.

The protein localises to the cytoplasm. The enzyme catalyses XMP + diphosphate = xanthine + 5-phospho-alpha-D-ribose 1-diphosphate. Its pathway is purine metabolism; XMP biosynthesis via salvage pathway; XMP from xanthine: step 1/1. Converts the preformed base xanthine, a product of nucleic acid breakdown, to xanthosine 5'-monophosphate (XMP), so it can be reused for RNA or DNA synthesis. This is Xanthine phosphoribosyltransferase from Staphylococcus aureus (strain JH1).